We begin with the raw amino-acid sequence, 339 residues long: Uroporphyrinogen decarboxylase (339 aa).

Substrate contacts are provided by residues 21-25 (RQAGR), Asp-71, Tyr-147, Ser-202, and His-315.

It belongs to the uroporphyrinogen decarboxylase family. Homodimer.

It localises to the cytoplasm. It catalyses the reaction uroporphyrinogen III + 4 H(+) = coproporphyrinogen III + 4 CO2. The protein operates within porphyrin-containing compound metabolism; protoporphyrin-IX biosynthesis; coproporphyrinogen-III from 5-aminolevulinate: step 4/4. Catalyzes the decarboxylation of four acetate groups of uroporphyrinogen-III to yield coproporphyrinogen-III. The chain is Uroporphyrinogen decarboxylase from Helicobacter pylori (strain G27).